A 50-amino-acid polypeptide reads, in one-letter code: ATP synthase protein 8 (50 aa).

The chain crosses the membrane as a helical span at residues 13–32 (ITFTFIILAITVYILSKYIL).

It belongs to the ATPase protein 8 family. F-type ATPases have 2 components, CF(1) - the catalytic core - and CF(0) - the membrane proton channel.

Its subcellular location is the mitochondrion membrane. Functionally, mitochondrial membrane ATP synthase (F(1)F(0) ATP synthase or Complex V) produces ATP from ADP in the presence of a proton gradient across the membrane which is generated by electron transport complexes of the respiratory chain. F-type ATPases consist of two structural domains, F(1) - containing the extramembraneous catalytic core and F(0) - containing the membrane proton channel, linked together by a central stalk and a peripheral stalk. During catalysis, ATP synthesis in the catalytic domain of F(1) is coupled via a rotary mechanism of the central stalk subunits to proton translocation. Part of the complex F(0) domain. Minor subunit located with subunit a in the membrane. The polypeptide is ATP synthase protein 8 (ATP8) (Podospora anserina (strain S / ATCC MYA-4624 / DSM 980 / FGSC 10383) (Pleurage anserina)).